Consider the following 309-residue polypeptide: Uracil phosphoribosyltransferase homolog (309 aa).

The interval 1 to 38 (MATELQCPDSMPCHNQQVNSASTPSPEQLRPGDLILDH) is disordered. Polar residues predominate over residues 13 to 26 (CHNQQVNSASTPSP). A Phosphoserine modification is found at S25. Residues R133, R142, and 176–179 (EKGN) contribute to the GTP site. Residue R186 coordinates 5-phospho-alpha-D-ribose 1-diphosphate. Residues R203 and R232 each coordinate GTP. Residue 238 to 246 (YPILSTGNT) coordinates 5-phospho-alpha-D-ribose 1-diphosphate. 299–301 (THF) is a uracil binding site.

Belongs to the UPRTase family. Highly expressed in leukocytes, liver, spleen and thymus, with lower expression in brain, lung and skeletal muscle.

It is found in the cytoplasm. It localises to the nucleus. The polypeptide is Uracil phosphoribosyltransferase homolog (UPRT) (Homo sapiens (Human)).